Consider the following 728-residue polypeptide: Cellulose synthase-like protein E6 (728 aa).

The next 2 helical transmembrane spans lie at 21–43 (AVYR…YRAT) and 53–73 (AAWL…VITQ). Residues aspartate 141 and aspartate 446 contribute to the active site. Transmembrane regions (helical) follow at residues 523-543 (LWAA…LGLV), 546-566 (TPLF…VFCV), 646-666 (PEFV…VAGL), 669-689 (IMAG…LIVI), and 707-727 (IPLP…LLPI).

Belongs to the glycosyltransferase 2 family. Plant cellulose synthase-like E subfamily.

Its subcellular location is the golgi apparatus membrane. Thought to be a Golgi-localized beta-glycan synthase that polymerize the backbones of noncellulosic polysaccharides (hemicelluloses) of plant cell wall. This is Cellulose synthase-like protein E6 (CSLE6) from Oryza sativa subsp. japonica (Rice).